A 74-amino-acid polypeptide reads, in one-letter code: NADH dehydrogenase [ubiquinone] 1 alpha subcomplex assembly factor 8 (74 aa).

The 48-residue stretch at 22–69 folds into the CHCH domain; it reads LAACGAEAAAYGRCVQASTAPGGRLSKDFCAREFEALRSCFAAAAKKT. Short sequence motifs (cx9C motif) lie at residues 25-35 and 51-61; these read CGAEAAAYGRC and CAREFEALRSC. Cystine bridges form between C25/C61 and C35/C51.

Interacts with NDUFAF5.

The protein localises to the mitochondrion. Functionally, involved in the assembly of mitochondrial NADH:ubiquinone oxidoreductase complex (complex I, MT-ND1). Required to stabilize NDUFAF5. The polypeptide is NADH dehydrogenase [ubiquinone] 1 alpha subcomplex assembly factor 8 (Homo sapiens (Human)).